Here is an 89-residue protein sequence, read N- to C-terminus: Small ribosomal subunit protein uS14 (89 aa).

The protein belongs to the universal ribosomal protein uS14 family. In terms of assembly, part of the 30S ribosomal subunit. Contacts proteins S3 and S10.

Binds 16S rRNA, required for the assembly of 30S particles and may also be responsible for determining the conformation of the 16S rRNA at the A site. The chain is Small ribosomal subunit protein uS14 from Leuconostoc citreum (strain KM20).